Reading from the N-terminus, the 463-residue chain is MIKSILSLQNFKFIKPCTNSSILKYNNNNNTNNNNNNNGINKYNSTFNNNNSNFSNKNLFSSKQYQQQSICNIPILSTISYHNKNNTNINTIINNNNSSNNNLINLNDKFNNLNNKTSPIIFNKNYSTTVSTLLDDNNSNSNNNNNSNNNKPSTTFVNDWISKFPNSVQPYLRLSRVDKPIGVWLLLYPCCWSISLAAPAGSFPDLKTMLVFGIGAYVMRSAGCVINDMADYKFDSKVERTKTRPIASKQLTHKQSLIFLGGQLLASFGLILSSLNYYTIALCASSLPIVVLYPFMKRFTYYPQFVLGLAFNWGALAGYSAIAGSCNWSIVAPLYLAGISWTMVYDTIYAHQDKRDDILVGVKSTALKFAEKSRIILSVFSGLVISGMFLTGIAANMPLFYYLGTAACSSHLIWQLKTVDFNNPSSCLEKFISNKNFGLYFLLIIIVSKLLQDKENENEIQKK.

Disordered stretches follow at residues 28–48 (NNNTNNNNNNNGINKYNSTFN) and 133–152 (LLDDNNSNSNNNNNSNNNKP). Residues 137–150 (NNSNSNNNNNSNNN) are compositionally biased toward low complexity. The next 7 helical transmembrane spans lie at 181 to 201 (IGVWLLLYPCCWSISLAAPAG), 206 to 226 (LKTMLVFGIGAYVMRSAGCVI), 257 to 277 (LIFLGGQLLASFGLILSSLNY), 305 to 325 (FVLGLAFNWGALAGYSAIAGS), 330 to 350 (IVAPLYLAGISWTMVYDTIYA), 375 to 395 (IILSVFSGLVISGMFLTGIAA), and 431 to 451 (FISNKNFGLYFLLIIIVSKLL).

The protein belongs to the UbiA prenyltransferase family. Mg(2+) is required as a cofactor.

Its subcellular location is the mitochondrion inner membrane. It catalyses the reaction an all-trans-polyprenyl diphosphate + 4-hydroxybenzoate = a 4-hydroxy-3-(all-trans-polyprenyl)benzoate + diphosphate. It participates in cofactor biosynthesis; ubiquinone biosynthesis. Catalyzes the prenylation of para-hydroxybenzoate (PHB) with an all-trans polyprenyl group. Mediates the second step in the final reaction sequence of coenzyme Q (CoQ) biosynthesis, which is the condensation of the polyisoprenoid side chain with PHB. Its function is as follows. Catalyzes the prenylation of para-hydroxybenzoate (PHB) with an all-trans polyprenyl group. Mediates the second step in the final reaction sequence of coenzyme Q (CoQ) biosynthesis, which is the condensation of the polyisoprenoid side chain with PHB, generating the first membrane-bound Q intermediate. The sequence is that of 4-hydroxybenzoate polyprenyltransferase, mitochondrial from Dictyostelium discoideum (Social amoeba).